Consider the following 153-residue polypeptide: 6,7-dimethyl-8-ribityllumazine synthase (153 aa).

5-amino-6-(D-ribitylamino)uracil-binding positions include F22, A56 to E58, and T80 to I82. A85 to T86 is a binding site for (2S)-2-hydroxy-3-oxobutyl phosphate. Residue H88 is the Proton donor of the active site. F113 serves as a coordination point for 5-amino-6-(D-ribitylamino)uracil. R127 is a binding site for (2S)-2-hydroxy-3-oxobutyl phosphate.

This sequence belongs to the DMRL synthase family.

The catalysed reaction is (2S)-2-hydroxy-3-oxobutyl phosphate + 5-amino-6-(D-ribitylamino)uracil = 6,7-dimethyl-8-(1-D-ribityl)lumazine + phosphate + 2 H2O + H(+). The protein operates within cofactor biosynthesis; riboflavin biosynthesis; riboflavin from 2-hydroxy-3-oxobutyl phosphate and 5-amino-6-(D-ribitylamino)uracil: step 1/2. Catalyzes the formation of 6,7-dimethyl-8-ribityllumazine by condensation of 5-amino-6-(D-ribitylamino)uracil with 3,4-dihydroxy-2-butanone 4-phosphate. This is the penultimate step in the biosynthesis of riboflavin. The sequence is that of 6,7-dimethyl-8-ribityllumazine synthase from Clostridium perfringens (strain ATCC 13124 / DSM 756 / JCM 1290 / NCIMB 6125 / NCTC 8237 / Type A).